The chain runs to 1605 residues: MQHQSLSVRNSSGISGNRDENFPSVRSSKVTVKTASISAKMAPHTQGSNLTIKQQYQPHQWPWNTSNNTNATNSNNVQSNNNSSTATSNSSTNSNNSPAVNTPTTQNQSQPTTQQSNTALVAAAAAGTLSVTAVNKLKRLQPTTHSEASTNTRSNSTNTIASGAKRIRTTNVEKVNKSVGTNTTGLSGPPGLVAVGSSLTTSAANATTTKKLTQMAIVAASNTSHHHQQISTAGTTTTTITKNAKNFTASGNADLCNANKITAGRATTLKTTTASSTTTATAEAEAEITTTTELMTTTSTVLQQKSIIKTGPVKTSNAASLEKYLNLLQQQQATSITPATTLKKVERKTARIAPTVSLTRKVSHSPQGGLGVGQPKKPVTIAPRTSDPKLSINYNQQMVATTATSAISTGNQLIKQQDQQLVKSPQSTVLLTTIRIPQQQQQHQQSTQTQQQTSQNQSQPQQNQTQAQLQAQQQFKQVVQQQLQLSSPPRTPTKLGSAVFQFHPQTTTVMPNLVQIPNLVPTQPVSSAAAKLNAPVVASSTTSSPTTANLVMNNATHGLTATRLNNGTTQLYMNGAVIKLHQIQQQQQQAIGTAGQQAPTPQQSLPMDSATVSMGLNGLLTKSATLSTAASTISTNQPAHQAKAFTLHAQKPTQLYQQANTSTATAYTPQPFFMAPSGQILLNTAALPTMLTSASLQQALVQAAQANIPALHPLQPSQPQSTQLPNITAIIQQQQQQQQQQQMLPNFHQLLANIPQAVLQNLQSTTKLGQTPQFVPIPSNLFLNPQNPVYTSSPSSSSFTSPITISTSTLPSGSTTISQPLSPPPLVATVPTYTTTAKPIMNTLNNQKIIIASATSTTSSKPPPPIKPISSTEPPKLVPVQLNKPSISITPVISNPPKLVPPSAPVPKLVLSASVATKATSTTPIKDKPKPNLPMSEPPALAPASCTPPLLTAPAPLPVASVPSPVLSPRAIDNKSPPALNPLSLDCGSSNDSGIVANSSDTEDKSLTIDLCSPGSPDSTPQKKDEESRQESTPSPVPSPSPLSEPPVIPAESEPEPEPEPELEPEPEMEPEPETEPEPEVEPEPEDEPHLEEPKIDESSEAVELPELEDPQPSPPLPCELPPPPTIETDLLDTLSLPPSQKSPKSLLLEQIKLKLPDQPDDQPQESMSSDQDYSNQSPLDESSPTGSAEPSESQRSTTPVDMSPPSIETDFLNTPQMTESAKSPILSQPKTIRFPAQNGVHHNFGRKGFRRLSDGRLFGVCYWSNCDAQFDTSSKLLDHLQIQHVNTQTGPFACLWDGCKVHNKESCSRRWLERHVLSHGGSKPHKCIVAGCGMRFGSQLALEKHVNHHFNNTDNASAGKRSSDPPLPKVLRKTGKKLRYRRQPWSARRFDFFDIGVMEGLQHRLIMAGSVASARRGTVTFRGQAAGRRVTGFGAEVFVKWYPREIISDDWIPEAEVTSTREISIYELNPDQRFELEAQLKTNRKANAELLFCLHELNLKLQAEASSTSCSRSSFSSSSSSSSSSGCSSASSSLISTPIPFNSRTEPKKLRKPPKQSYQPSSSGTTSSLSSVLSSSASSLLSNENSSSSSSSSSSSSSSSSSTS.

Residues 1-15 (MQHQSLSVRNSSGIS) show a composition bias toward polar residues. 7 disordered regions span residues 1 to 28 (MQHQ…VRSS), 60 to 117 (QWPW…QQSN), 359 to 388 (TRKV…TSDP), 441 to 468 (QQHQ…TQAQ), 856 to 877 (STTS…PPKL), 917 to 947 (TKAT…ASCT), and 991 to 1213 (NDSG…TDFL). Positions 64-117 (NTSNNTNATNSNNVQSNNNSSTATSNSSTNSNNSPAVNTPTTQNQSQPTTQQSN) are enriched in low complexity. Polar residues predominate over residues 991–1000 (NDSGIVANSS). Residues 1021–1030 (PQKKDEESRQ) are compositionally biased toward basic and acidic residues. Positions 1035–1049 (SPVPSPSPLSEPPVI) are enriched in pro residues. 2 stretches are compositionally biased toward acidic residues: residues 1053–1090 (SEPE…DEPH) and 1099–1110 (SSEAVELPELED). The span at 1112-1126 (QPSPPLPCELPPPPT) shows a compositional bias: pro residues. Residues 1135–1149 (LSLPPSQKSPKSLLL) show a composition bias toward low complexity. Over residues 1165 to 1201 (QESMSSDQDYSNQSPLDESSPTGSAEPSESQRSTTPV) the composition is skewed to polar residues. A C2H2-type 1 zinc finger spans residues 1260 to 1285 (GVCYWSNCDAQFDTSSKLLDHLQIQH). Residues 1293 to 1320 (FACLWDGCKVHNKESCSRRWLERHVLSH) form a C2H2-type 2; degenerate zinc finger. The C2H2-type 3 zinc finger occupies 1326–1350 (HKCIVAGCGMRFGSQLALEKHVNHH). Disordered regions lie at residues 1352-1371 (NNTD…LPKV) and 1511-1605 (CSRS…SSTS). Composition is skewed to low complexity over residues 1511-1537 (CSRS…SLIS) and 1556-1605 (KQSY…SSTS).

It belongs to the AEBP2/jing C2H2-type zinc-finger family.

The protein resides in the nucleus. Functionally, may functionally interact with Polycomb group (PcG) and trithorax group (trxG) proteins to repress transcription. The protein is Zinc finger protein jing homolog of Aedes aegypti (Yellowfever mosquito).